We begin with the raw amino-acid sequence, 222 residues long: MSVRHSGIGMTSPRTRVRMVERLREQGVRDEVVLAAMGSIPRHLFVEEALASRAYEDVALPINYGQTISSPWIVGRMSELLRNGGNNSLRKVLEIGTGCGYQTAVLAKIANEVYSIERIGPLLTRTRIRLRELGIRNIYLKHADGMRGLLEAGPFDGIMMTAVIPEIPETLLEQLAMGGRMVFPKGNRQQYLCVIDHTTEGFVETILDEVMFVPILPGTINR.

Residue S69 is part of the active site.

This sequence belongs to the methyltransferase superfamily. L-isoaspartyl/D-aspartyl protein methyltransferase family.

Its subcellular location is the cytoplasm. It catalyses the reaction [protein]-L-isoaspartate + S-adenosyl-L-methionine = [protein]-L-isoaspartate alpha-methyl ester + S-adenosyl-L-homocysteine. In terms of biological role, catalyzes the methyl esterification of L-isoaspartyl residues in peptides and proteins that result from spontaneous decomposition of normal L-aspartyl and L-asparaginyl residues. It plays a role in the repair and/or degradation of damaged proteins. This is Protein-L-isoaspartate O-methyltransferase from Nitrosomonas eutropha (strain DSM 101675 / C91 / Nm57).